The following is a 72-amino-acid chain: Heat shock factor-binding protein 1-like protein 1 (72 aa).

A coiled-coil region spans residues 12 to 66; that stretch reads DLLQNAAENLLQEVEEHFQALTATLNLRMEEMGNRIEDLQRNVDDLMAQAGIENS.

The protein belongs to the HSBP1 family.

The polypeptide is Heat shock factor-binding protein 1-like protein 1 (Hsbp1l1) (Rattus norvegicus (Rat)).